Reading from the N-terminus, the 396-residue chain is Elongation factor Tu (396 aa).

In terms of domain architecture, tr-type G spans 10–205; it reads KSHANIGTIG…AVDEYIPTPE (196 aa). Residues 19–26 form a G1 region; sequence GHVDHGKT. 19–26 provides a ligand contact to GTP; the sequence is GHVDHGKT. Residue Thr26 coordinates Mg(2+). Residues 61–65 are G2; that stretch reads GITIS. Residues 82-85 are G3; the sequence is DCPG. GTP is bound by residues 82–86 and 137–140; these read DCPGH and NKCD. The segment at 137-140 is G4; that stretch reads NKCD. Positions 175 to 177 are G5; that stretch reads SAL.

This sequence belongs to the TRAFAC class translation factor GTPase superfamily. Classic translation factor GTPase family. EF-Tu/EF-1A subfamily. As to quaternary structure, monomer.

It localises to the cytoplasm. It catalyses the reaction GTP + H2O = GDP + phosphate + H(+). GTP hydrolase that promotes the GTP-dependent binding of aminoacyl-tRNA to the A-site of ribosomes during protein biosynthesis. In Bacillus pumilus (strain SAFR-032), this protein is Elongation factor Tu.